A 1213-amino-acid polypeptide reads, in one-letter code: DNA-directed RNA polymerase subunit beta' (1213 aa).

The Zn(2+) site is built by cysteine 60, cysteine 62, cysteine 75, and cysteine 78. Residues aspartate 450, aspartate 452, and aspartate 454 each coordinate Mg(2+). 4 residues coordinate Zn(2+): cysteine 819, cysteine 893, cysteine 900, and cysteine 903.

This sequence belongs to the RNA polymerase beta' chain family. In terms of assembly, the RNAP catalytic core consists of 2 alpha, 1 beta, 1 beta' and 1 omega subunit. When a sigma factor is associated with the core the holoenzyme is formed, which can initiate transcription. Mg(2+) serves as cofactor. Requires Zn(2+) as cofactor.

It carries out the reaction RNA(n) + a ribonucleoside 5'-triphosphate = RNA(n+1) + diphosphate. In terms of biological role, DNA-dependent RNA polymerase catalyzes the transcription of DNA into RNA using the four ribonucleoside triphosphates as substrates. The polypeptide is DNA-directed RNA polymerase subunit beta' (Streptococcus pyogenes serotype M4 (strain MGAS10750)).